The following is a 213-amino-acid chain: U1 small nuclear ribonucleoprotein C (213 aa).

The Matrin-type zinc-finger motif lies at 4 to 36 (YYCDYCDTYLTHDSPSVRKQHNAGYKHKANVRS). Over residues 143-166 (APSMPMPPLNSLPRPPTMNVPPAV) the composition is skewed to pro residues. Positions 143 to 213 (APSMPMPPLN…INAQGPEANH (71 aa)) are disordered. Positions 167-180 (PGSTSTPTSGGAPS) are enriched in low complexity.

Belongs to the U1 small nuclear ribonucleoprotein C family. U1 snRNP is composed of the 7 core Sm proteins B/B', D1, D2, D3, E, F and G that assemble in a heptameric protein ring on the Sm site of the small nuclear RNA to form the core snRNP, and at least 3 U1 snRNP-specific proteins U1-70K, U1-A and U1-C. U1-C interacts with U1 snRNA and the 5' splice-site region of the pre-mRNA.

Its subcellular location is the nucleus. Component of the spliceosomal U1 snRNP, which is essential for recognition of the pre-mRNA 5' splice-site and the subsequent assembly of the spliceosome. U1-C is directly involved in initial 5' splice-site recognition for both constitutive and regulated alternative splicing. The interaction with the 5' splice-site seems to precede base-pairing between the pre-mRNA and the U1 snRNA. Stimulates commitment or early (E) complex formation by stabilizing the base pairing of the 5' end of the U1 snRNA and the 5' splice-site region. The protein is U1 small nuclear ribonucleoprotein C of Vitis vinifera (Grape).